The following is a 360-amino-acid chain: Peptide chain release factor 1 (360 aa).

Residue Gln236 is modified to N5-methylglutamine.

This sequence belongs to the prokaryotic/mitochondrial release factor family. Methylated by PrmC. Methylation increases the termination efficiency of RF1.

It is found in the cytoplasm. Peptide chain release factor 1 directs the termination of translation in response to the peptide chain termination codons UAG and UAA. In Limosilactobacillus reuteri subsp. reuteri (strain JCM 1112) (Lactobacillus reuteri), this protein is Peptide chain release factor 1.